The following is a 405-amino-acid chain: Dynactin subunit 2 (405 aa).

The interval 1 to 24 is disordered; the sequence is MADPKYADLPGIARNEPDVYETSD. Positions 101-134 form a coiled coil; the sequence is PQQKYQRLLHEIQELTQEVEKAQSTVKESAAEEK. A disordered region spans residues 186-207; it reads AKTRKNPEGKSPAKGPGPDNEN. The stretch at 383 to 403 forms a coiled coil; sequence KENLATVEDNFTSIDARIKKL.

The protein belongs to the dynactin subunit 2 family. In terms of assembly, subunit of dynactin, a multiprotein complex part of a tripartite complex with dynein and a adapter, such as BICDL1, BICD2 or HOOK3. The dynactin complex is built around ACTR1A/ACTB filament and consists of an actin-related filament composed of a shoulder domain, a pointed end and a barbed end. Its length is defined by its flexible shoulder domain. The soulder is composed of 2 DCTN1 subunits, 4 DCTN2 and 2 DCTN3.

Its subcellular location is the cytoplasm. It is found in the cytoskeleton. The protein localises to the microtubule organizing center. It localises to the centrosome. The protein resides in the membrane. Part of the dynactin complex that activates the molecular motor dynein for ultra-processive transport along microtubules. In the dynactin soulder domain, binds the ACTR1A filament and acts as a molecular ruler to determine the length. Modulates cytoplasmic dynein binding to an organelle, and plays a role in prometaphase chromosome alignment and spindle organization during mitosis. Involved in anchoring microtubules to centrosomes. The protein is Dynactin subunit 2 (dctn2) of Xenopus tropicalis (Western clawed frog).